The chain runs to 337 residues: Phosphate acyltransferase (337 aa).

This sequence belongs to the PlsX family. In terms of assembly, homodimer. Probably interacts with PlsY.

It localises to the cytoplasm. It carries out the reaction a fatty acyl-[ACP] + phosphate = an acyl phosphate + holo-[ACP]. It functions in the pathway lipid metabolism; phospholipid metabolism. Catalyzes the reversible formation of acyl-phosphate (acyl-PO(4)) from acyl-[acyl-carrier-protein] (acyl-ACP). This enzyme utilizes acyl-ACP as fatty acyl donor, but not acyl-CoA. This chain is Phosphate acyltransferase, found in Moritella marina (Vibrio marinus).